The sequence spans 331 residues: Fructose-1,6-bisphosphatase class 1 (331 aa).

Residues E88, D108, L110, and D111 each coordinate Mg(2+). Substrate is bound by residues 111–114 and N201; that span reads DGSS. E273 is a binding site for Mg(2+).

This sequence belongs to the FBPase class 1 family. In terms of assembly, homotetramer. Mg(2+) serves as cofactor.

The protein resides in the cytoplasm. It catalyses the reaction beta-D-fructose 1,6-bisphosphate + H2O = beta-D-fructose 6-phosphate + phosphate. It functions in the pathway carbohydrate biosynthesis; gluconeogenesis. This Methylobacillus flagellatus (strain ATCC 51484 / DSM 6875 / VKM B-1610 / KT) protein is Fructose-1,6-bisphosphatase class 1.